The sequence spans 355 residues: UDP-N-acetylglucosamine--N-acetylmuramyl-(pentapeptide) pyrophosphoryl-undecaprenol N-acetylglucosamine transferase (355 aa).

UDP-N-acetyl-alpha-D-glucosamine-binding positions include 15-17, Asn127, Arg163, Ser191, Ile244, 263-268, and Gln288; these read TGG and ALTVSE.

Belongs to the glycosyltransferase 28 family. MurG subfamily.

The protein localises to the cell inner membrane. It catalyses the reaction di-trans,octa-cis-undecaprenyl diphospho-N-acetyl-alpha-D-muramoyl-L-alanyl-D-glutamyl-meso-2,6-diaminopimeloyl-D-alanyl-D-alanine + UDP-N-acetyl-alpha-D-glucosamine = di-trans,octa-cis-undecaprenyl diphospho-[N-acetyl-alpha-D-glucosaminyl-(1-&gt;4)]-N-acetyl-alpha-D-muramoyl-L-alanyl-D-glutamyl-meso-2,6-diaminopimeloyl-D-alanyl-D-alanine + UDP + H(+). It participates in cell wall biogenesis; peptidoglycan biosynthesis. Cell wall formation. Catalyzes the transfer of a GlcNAc subunit on undecaprenyl-pyrophosphoryl-MurNAc-pentapeptide (lipid intermediate I) to form undecaprenyl-pyrophosphoryl-MurNAc-(pentapeptide)GlcNAc (lipid intermediate II). This chain is UDP-N-acetylglucosamine--N-acetylmuramyl-(pentapeptide) pyrophosphoryl-undecaprenol N-acetylglucosamine transferase, found in Salmonella arizonae (strain ATCC BAA-731 / CDC346-86 / RSK2980).